The sequence spans 116 residues: Large ribosomal subunit protein bL19 (116 aa).

It belongs to the bacterial ribosomal protein bL19 family.

In terms of biological role, this protein is located at the 30S-50S ribosomal subunit interface and may play a role in the structure and function of the aminoacyl-tRNA binding site. In Histophilus somni (strain 129Pt) (Haemophilus somnus), this protein is Large ribosomal subunit protein bL19.